The following is a 1487-amino-acid chain: Collagen alpha-1(II) chain (1487 aa).

Residues Met-1–Gly-25 form the signal peptide. Residues Gln-26 to Ala-181 constitute a propeptide, N-terminal propeptide. The 59-residue stretch at Gly-32–Ser-90 folds into the VWFC domain. The interval Ala-96–Asp-1234 is disordered. Composition is skewed to basic and acidic residues over residues Gln-105–Val-116 and Pro-133–Glu-154. Residues Pro-158–Pro-173 show a composition bias toward pro residues. 5-hydroxylysine is present on Lys-190. Lys-190 carries an O-linked (Gal...) hydroxylysine glycan. Residues Gly-192 to Met-203 are compositionally biased toward low complexity. A triple-helical region region spans residues Gly-201 to Pro-1214. Residues Pro-208–Ala-217 are compositionally biased toward pro residues. Hydroxyproline is present on residues Pro-212, Pro-218, Pro-230, Pro-233, Pro-245, Pro-248, Pro-251, Pro-260, Pro-269, Pro-278, Pro-281, and Pro-284. Positions Pro-218–Met-239 are enriched in low complexity. A compositionally biased stretch (pro residues) spans Pro-241–Lys-250. Residues Pro-251 to Glu-265 are compositionally biased toward basic and acidic residues. A 5-hydroxylysine modification is found at Lys-287. Lys-287 carries an O-linked (Gal...) hydroxylysine glycan. The residue at position 293 (Pro-293) is a Hydroxyproline. At Lys-299 the chain carries 5-hydroxylysine. Lys-299 is a glycosylation site (O-linked (Gal...) hydroxylysine). Residue Pro-305 is modified to Hydroxyproline. Residue Lys-308 is modified to 5-hydroxylysine. Lys-308 carries an O-linked (Gal...) hydroxylysine glycan. Low complexity predominate over residues Glu-310–Pro-320. Pro-314, Pro-320, Pro-329, Pro-350, Pro-356, Pro-365, Pro-368, and Pro-371 each carry hydroxyproline. Residues Thr-335–Pro-350 are compositionally biased toward low complexity. The segment covering Gly-360 to Gly-369 has biased composition (gly residues). 2 stretches are compositionally biased toward low complexity: residues Ala-370 to Ala-382 and Pro-391 to Pro-431. Lys-374 carries the 5-hydroxylysine modification. O-linked (Gal...) hydroxylysine glycosylation is present at Lys-374. A hydroxyproline mark is found at Pro-395, Pro-398, Pro-401, Pro-410, and Pro-416. Residue Lys-419 is modified to 5-hydroxylysine. Pro-425, Pro-431, Pro-434, and Pro-440 each carry hydroxyproline. The segment covering Phe-433–Pro-442 has biased composition (pro residues). At Lys-452 the chain carries 5-hydroxylysine. At Pro-458 the chain carries Hydroxyproline. Residues Lys-464 and Lys-470 each carry the 5-hydroxylysine modification. Residues Pro-473, Pro-482, Pro-497, Pro-506, Pro-512, and Pro-518 each carry the hydroxyproline modification. Lys-527 is subject to 5-hydroxylysine. Pro-530 bears the Hydroxyproline mark. The residue at position 542 (Lys-542) is a 5-hydroxylysine. 8 positions are modified to hydroxyproline: Pro-551, Pro-557, Pro-566, Pro-581, Pro-587, Pro-590, Pro-599, and Pro-605. 5-hydroxylysine is present on Lys-608. A glycan (O-linked (Gal...) hydroxylysine) is linked at Lys-608. At Pro-614 the chain carries Hydroxyproline. Residue Lys-620 is modified to 5-hydroxylysine. O-linked (Gal...) hydroxylysine glycosylation is present at Lys-620. The segment covering Leu-622 to Leu-631 has biased composition (low complexity). Hydroxyproline is present on residues Pro-623, Pro-626, Pro-632, Pro-644, Pro-659, and Pro-668. Residues Gln-656 to Leu-667 show a composition bias toward low complexity. Pro-670 is subject to 3-hydroxyproline. Pro-671 and Pro-674 each carry hydroxyproline. Residues Leu-721–Pro-736 show a composition bias toward low complexity. Over residues Lys-764–Pro-775 the composition is skewed to basic and acidic residues. Low complexity-rich tracts occupy residues Ala-833–Lys-848 and Pro-877–Asn-913. Pro-907 carries the post-translational modification 3-hydroxyproline. Pro-908, Pro-914, and Pro-920 each carry 4-hydroxyproline. Residues Ala-1069–Ala-1079 show a composition bias toward pro residues. A compositionally biased stretch (low complexity) spans Ala-1091–Pro-1109. Residues Arg-1115–Leu-1129 show a composition bias toward basic and acidic residues. Lys-1130 bears the 5-hydroxylysine mark. Lys-1130 carries an O-linked (Gal...) hydroxylysine glycan. At Pro-1144 the chain carries 3-hydroxyproline. Residues Ser-1148–Ala-1157 are compositionally biased toward low complexity. Pro-1181 is subject to 4-hydroxyproline. Pro-1186 bears the 3-hydroxyproline mark. Pro-1187 is modified (4-hydroxyproline). The segment covering Ala-1199–Pro-1216 has biased composition (pro residues). Pro-1201 is subject to 3-hydroxyproline. 4-hydroxyproline occurs at positions 1202 and 1205. Position 1207 is a 3-hydroxyproline (Pro-1207). Residues Pro-1208 and Pro-1211 each carry the 4-hydroxyproline modification. 3-hydroxyproline is present on Pro-1213. Pro-1214 is modified (4-hydroxyproline). Residues Gly-1215 to Ala-1241 are nonhelical region (C-terminal). Residues Ala-1253 to Leu-1487 enclose the Fibrillar collagen NC1 domain. 3 disulfide bridges follow: Cys-1283/Cys-1315, Cys-1323/Cys-1485, and Cys-1393/Cys-1438. Residues Asp-1301, Asn-1303, Gln-1304, Cys-1306, and Asp-1309 each coordinate Ca(2+). Residue Asn-1388 is glycosylated (N-linked (GlcNAc...) asparagine).

It belongs to the fibrillar collagen family. As to quaternary structure, homotrimers of alpha 1(II) chains. In terms of processing, probably 3-hydroxylated on prolines by LEPREL1. Proline residues at the third position of the tripeptide repeating unit (G-X-P) are hydroxylated in some or all of the chains. Proline residues at the second position of the tripeptide repeating unit (G-P-X) are hydroxylated in some of the chains. Post-translationally, O-linked glycans consist of Glc-Gal disaccharides bound to the oxygen atom of post-translationally added hydroxyl groups. Contains mostly 4-hydroxyproline. Prolines at the third position of the tripeptide repeating unit (G-X-P) are 4-hydroxylated in some or all of the chains. In terms of processing, contains 3-hydroxyproline at a few sites. This modification occurs on the first proline residue in the sequence motif Gly-Pro-Hyp, where Hyp is 4-hydroxyproline. Post-translationally, lysine residues at the third position of the tripeptide repeating unit (G-X-Y) are 5-hydroxylated in some or all of the chains. O-glycosylated on hydroxylated lysine residues. The O-linked glycan consists of a Glc-Gal disaccharide.

It localises to the secreted. It is found in the extracellular space. The protein resides in the extracellular matrix. In terms of biological role, type II collagen is specific for cartilaginous tissues. It is essential for the normal embryonic development of the skeleton, for linear growth and for the ability of cartilage to resist compressive forces. This chain is Collagen alpha-1(II) chain, found in Bos taurus (Bovine).